Here is a 416-residue protein sequence, read N- to C-terminus: DNA-guanine transglycosylase (416 aa).

The Proton acceptor role is filled by Asp95. Asp256 (nucleophile) is an active-site residue. Positions 368, 370, 373, and 395 each coordinate Zn(2+).

This sequence belongs to the DNA-guanine transglycosylase family. Zn(2+) is required as a cofactor.

Part of the dpd cluster involved in the insertion of 7-deazaguanine derivatives in DNA. DpdA may insert 7-cyano-7-deazaguanine (preQ0) into DNA with the help of DpdB. DpdA and dpdB are necessary and sufficient to synthesize 2'-deoxy-7-cyano-7-deazaguanosine (dPreQ0). In Salmonella montevideo, this protein is DNA-guanine transglycosylase.